Here is a 585-residue protein sequence, read N- to C-terminus: Pyruvate kinase (585 aa).

R32 lines the substrate pocket. K(+) contacts are provided by N34, S36, D66, and T67. 34 to 37 (NFSH) is a binding site for ATP. Positions 73 and 156 each coordinate ATP. E221 contributes to the Mg(2+) binding site. Residues G244, D245, and T277 each contribute to the substrate site. D245 serves as a coordination point for Mg(2+).

The protein belongs to the pyruvate kinase family. It in the C-terminal section; belongs to the PEP-utilizing enzyme family. The cofactor is Mg(2+). K(+) is required as a cofactor.

The enzyme catalyses pyruvate + ATP = phosphoenolpyruvate + ADP + H(+). It participates in carbohydrate degradation; glycolysis; pyruvate from D-glyceraldehyde 3-phosphate: step 5/5. The polypeptide is Pyruvate kinase (pyk) (Staphylococcus aureus (strain bovine RF122 / ET3-1)).